A 459-amino-acid chain; its full sequence is Bifunctional protein GlmU (459 aa).

Residues 1–229 (MSNFAIILAA…FDESLGVNDR (229 aa)) form a pyrophosphorylase region. Residues 8-11 (LAAG), Lys-22, Gln-72, and 77-78 (GT) contribute to the UDP-N-acetyl-alpha-D-glucosamine site. Asp-102 provides a ligand contact to Mg(2+). Residues Gly-139, Glu-154, Asn-169, and Asn-227 each coordinate UDP-N-acetyl-alpha-D-glucosamine. A Mg(2+)-binding site is contributed by Asn-227. The interval 230-250 (VALATAESVMRRRINHKHMVN) is linker. The N-acetyltransferase stretch occupies residues 251–459 (GVSFVNPEAT…TRLPHHPKNQ (209 aa)). 2 residues coordinate UDP-N-acetyl-alpha-D-glucosamine: Arg-332 and Lys-350. His-362 (proton acceptor) is an active-site residue. UDP-N-acetyl-alpha-D-glucosamine is bound by residues Tyr-365 and Asn-376. Residues Ala-379, 385 to 386 (NY), Ser-404, Ala-422, and Arg-439 contribute to the acetyl-CoA site.

It in the N-terminal section; belongs to the N-acetylglucosamine-1-phosphate uridyltransferase family. The protein in the C-terminal section; belongs to the transferase hexapeptide repeat family. As to quaternary structure, homotrimer. Mg(2+) is required as a cofactor.

It localises to the cytoplasm. The enzyme catalyses alpha-D-glucosamine 1-phosphate + acetyl-CoA = N-acetyl-alpha-D-glucosamine 1-phosphate + CoA + H(+). The catalysed reaction is N-acetyl-alpha-D-glucosamine 1-phosphate + UTP + H(+) = UDP-N-acetyl-alpha-D-glucosamine + diphosphate. Its pathway is nucleotide-sugar biosynthesis; UDP-N-acetyl-alpha-D-glucosamine biosynthesis; N-acetyl-alpha-D-glucosamine 1-phosphate from alpha-D-glucosamine 6-phosphate (route II): step 2/2. It participates in nucleotide-sugar biosynthesis; UDP-N-acetyl-alpha-D-glucosamine biosynthesis; UDP-N-acetyl-alpha-D-glucosamine from N-acetyl-alpha-D-glucosamine 1-phosphate: step 1/1. The protein operates within bacterial outer membrane biogenesis; LPS lipid A biosynthesis. In terms of biological role, catalyzes the last two sequential reactions in the de novo biosynthetic pathway for UDP-N-acetylglucosamine (UDP-GlcNAc). The C-terminal domain catalyzes the transfer of acetyl group from acetyl coenzyme A to glucosamine-1-phosphate (GlcN-1-P) to produce N-acetylglucosamine-1-phosphate (GlcNAc-1-P), which is converted into UDP-GlcNAc by the transfer of uridine 5-monophosphate (from uridine 5-triphosphate), a reaction catalyzed by the N-terminal domain. This Streptococcus pneumoniae (strain Hungary19A-6) protein is Bifunctional protein GlmU.